A 448-amino-acid polypeptide reads, in one-letter code: Chromogranin-A (448 aa).

An N-terminal signal peptide occupies residues 1–18; the sequence is MRSAVVLALLLCAGQVIA. Cysteine 35 and cysteine 56 form a disulfide bridge. The interval 116–251 is disordered; sequence LKEVTEEALS…AFNPHPSLSY (136 aa). Composition is skewed to basic and acidic residues over residues 129-139 and 158-175; these read AEARGDSKEVE and QESR…KEAI. Serine 197 carries the phosphoserine modification. The span at 205–222 shows a compositional bias: basic and acidic residues; that stretch reads VDREKGLGAERGQQAKRE. Over residues 223 to 238 the composition is skewed to acidic residues; it reads EEEDEAGEKADAEEEG. Residues serine 258 and serine 288 each carry the phosphoserine modification. Residues 263–429 form a disordered region; sequence LVVDGARKTG…PEDQELESLS (167 aa). A Glycine amide modification is found at glycine 308. Basic and acidic residues predominate over residues 310-350; it reads KSRELEQEKEQERLSKEWEDAKRWSKMDQLAKELTAEKRLE. A phosphoserine mark is found at serine 311, serine 324, and serine 362. Methionine 363 carries the post-translational modification Methionine sulfoxide. Phosphoserine occurs at positions 389, 393, 415, and 429. Over residues 405-422 the composition is skewed to basic and acidic residues; sequence YPEEKKEEEGSANRRPED. A glycan (O-linked (Xyl...) (chondroitin sulfate) serine) is linked at serine 415.

The protein belongs to the chromogranin/secretogranin protein family. In terms of assembly, self-interacts; self-assembly is promoted in vitro by chondroitin sulfate attachment which occurs at mildly acidic pH conditions. Interacts with SCG3. Interacts with ITPR1 in the secretory granules. O-glycosylated; contains chondroitin sulfate (CS). CS attachment is pH-dependent, being observed at mildly acidic conditions of pH 5 but not at neutral pH, and promotes self-assembly in vitro. In terms of tissue distribution, highly expressed in adrenal medulla and pituitary gland. Weaker expression detected in cerebrum, cerebellum, spinal cord, liver, thyroid gland, striated muscle, lung, spleen, kidney, parotid gland, and sublingual gland.

It localises to the secreted. The protein localises to the cytoplasmic vesicle. It is found in the secretory vesicle. The protein resides in the neuronal dense core vesicle. Its function is as follows. Strongly inhibits glucose induced insulin release from the pancreas. Inhibits catecholamine release from chromaffin cells and noradrenergic neurons by acting as a non-competitive nicotinic cholinergic antagonist. Can induce mast cell migration, degranulation and production of cytokines and chemokines. In terms of biological role, regulates granule biogenesis in endocrine cells by up-regulating the transcription of protease nexin 1 (SERPINE2) via a cAMP-PKA-SP1 pathway. This leads to inhibition of granule protein degradation in the Golgi complex which in turn promotes granule formation. This is Chromogranin-A (CHGA) from Equus caballus (Horse).